A 597-amino-acid polypeptide reads, in one-letter code: Chaperonin 60 subunit beta 3, chloroplastic (597 aa).

The tract at residues 1-20 is disordered; it reads MASTFSATSSMGSSLAPPSN. The N-terminal 29 residues, 1–29, are a transit peptide targeting the chloroplast; that stretch reads MASTFSATSSMGSSLAPPSNRLSSFVSIS. Residues serine 97 and serine 474 each carry the phosphoserine modification. A coiled-coil region spans residues 387–489; it reads STEEVVKKRV…KETLANDEEK (103 aa).

Belongs to the chaperonin (HSP60) family. In terms of assembly, part of the Cpn60 complex composed of 7 alpha and 7 beta subunits. Can also form a complex composed of 14 beta subunits only. Both complexes show ATPase activity. The Cpn60 complex interacts with the Cpn10 complex.

It localises to the plastid. The protein resides in the chloroplast. Involved in protein assisted folding. The sequence is that of Chaperonin 60 subunit beta 3, chloroplastic (CPN60B3) from Arabidopsis thaliana (Mouse-ear cress).